Consider the following 515-residue polypeptide: MIPVSLLVVVVGGWTAVYLADLVLKSSVYFKHSYEDWLENNGLSISPFHIRWQTSIFNRAFYSWGRRKARMLYQWFNFGMVFGVIAMFSSFFLLGKTLMQTLAQMMADSPSPYSSSSSSSSSSSSSSSSSSSLHNEQVLQVVVPGINLPVNQLTYFFAAVLISGVVHEIGHGIAAIREQVRFNGFGIFLFIIYPGAFVDLFTTHLQLISPVQQLRIFCAGIWHNFVLALLGILALVLLPVILLPFYYTGVGVLITEVAEDSPAIGPRGLFVGDLVTHLQDCPVTNVQDWNECLDTIAYEPQIGYCISASTLQQLSFPVRAYKRLDGSTECCNNHSLTDVCFSYRNNFNKRLHTCLPARKAVEATQVCRSNKDCKSGASSSFCIVPSLETHTRLIKVKHPPQIDMLYVGHPLHLHYTVSITSFIPRFNFLSIDLPVIVETFVKYLISLSGALAIVNAVPCFALDGQWILNSFLDATLTSVIGDNDVKDLIGFFILLGGSVLLAANVTLGLWMVTAR.

Residues Met1–Pro3 are Cytoplasmic-facing. A helical membrane pass occupies residues Val4–Leu24. Topologically, residues Lys25 to Gln74 are lumenal. Transmembrane regions (helical) follow at residues Trp75–Gly95 and Lys96–Ala107. The Lumenal portion of the chain corresponds to Asp108–Gln140. Residues Val141–Val165 form a helical membrane-spanning segment. His167 contacts Zn(2+). The active site involves Glu168. 3 helical membrane passes run Gly170–Phe182, Asn183–Leu205, and Phe225–Tyr247. His171 contributes to the Zn(2+) binding site. The Lumenal portion of the chain corresponds to Thr248–Lys442. Asn333 carries an N-linked (GlcNAc...) asparagine glycan. 2 helical membrane-spanning segments follow: residues Tyr443–Phe460 and Ala461–Leu472. Topologically, residues Asp473–Leu488 are lumenal. Residues Ile489–Leu509 traverse the membrane as a helical segment. Over Trp510 to Arg515 the chain is Cytoplasmic.

The protein belongs to the peptidase M50A family. Requires Zn(2+) as cofactor.

The protein localises to the membrane. It is found in the cytoplasm. Its subcellular location is the golgi apparatus membrane. It carries out the reaction Cleaves several transcription factors that are type-2 transmembrane proteins within membrane-spanning domains. Known substrates include sterol regulatory element-binding protein (SREBP) -1, SREBP-2 and forms of the transcriptional activator ATF6. SREBP-2 is cleaved at the site 477-DRSRILL-|-CVLTFLCLSFNPLTSLLQWGGA-505. The residues Asn-Pro, 11 residues distal to the site of cleavage in the membrane-spanning domain, are important for cleavage by S2P endopeptidase. Replacement of either of these residues does not prevent cleavage, but there is no cleavage if both of these residues are replaced.. Its function is as follows. Zinc metalloprotease that mediates intramembrane proteolysis of proteins such as ATF6, ATF6B, SREBF1/SREBP1 and SREBF2/SREBP2. Catalyzes the second step in the proteolytic activation of the sterol regulatory element-binding proteins (SREBPs) SREBF1/SREBP1 and SREBF2/SREBP2: cleaves SREBPs within the first transmembrane segment, thereby releasing the N-terminal segment with a portion of the transmembrane segment attached. Mature N-terminal SREBP fragments shuttle to the nucleus and activate gene transcription. Also mediates the second step in the proteolytic activation of the cyclic AMP-dependent transcription factor ATF-6 (ATF6 and ATF6B). Involved in intramembrane proteolysis during bone formation. In astrocytes and osteoblasts, upon DNA damage and ER stress, mediates the second step of the regulated intramembrane proteolytic activation of the transcription factor CREB3L1, leading to the inhibition of cell-cycle progression. This chain is Membrane-bound transcription factor site-2 protease (Mbtps2), found in Mus musculus (Mouse).